Reading from the N-terminus, the 334-residue chain is Aspartate carbamoyltransferase catalytic subunit (334 aa).

Carbamoyl phosphate is bound by residues Arg71 and Thr72. L-aspartate is bound at residue Lys99. The carbamoyl phosphate site is built by Arg121, His151, and Gln154. Arg184 and Arg239 together coordinate L-aspartate. Gly280 and Pro281 together coordinate carbamoyl phosphate.

This sequence belongs to the aspartate/ornithine carbamoyltransferase superfamily. ATCase family. Heterododecamer (2C3:3R2) of six catalytic PyrB chains organized as two trimers (C3), and six regulatory PyrI chains organized as three dimers (R2).

The enzyme catalyses carbamoyl phosphate + L-aspartate = N-carbamoyl-L-aspartate + phosphate + H(+). The protein operates within pyrimidine metabolism; UMP biosynthesis via de novo pathway; (S)-dihydroorotate from bicarbonate: step 2/3. Its function is as follows. Catalyzes the condensation of carbamoyl phosphate and aspartate to form carbamoyl aspartate and inorganic phosphate, the committed step in the de novo pyrimidine nucleotide biosynthesis pathway. The protein is Aspartate carbamoyltransferase catalytic subunit of Pseudomonas putida (Arthrobacter siderocapsulatus).